A 429-amino-acid polypeptide reads, in one-letter code: Adenylosuccinate synthetase (429 aa).

Residues Gly12–Lys18 and Gly40–Thr42 contribute to the GTP site. Asp13 functions as the Proton acceptor in the catalytic mechanism. Residues Asp13 and Gly40 each contribute to the Mg(2+) site. Residues Asp13–Lys16, Asn38–His41, Thr128, Arg142, Gln223, Thr238, and Arg302 each bind IMP. The active-site Proton donor is the His41. Thr298–Arg304 lines the substrate pocket. GTP is bound by residues Arg304, Ser330–Asp332, and Ser412–Gly414.

This sequence belongs to the adenylosuccinate synthetase family. As to quaternary structure, homodimer. Mg(2+) serves as cofactor.

It is found in the cytoplasm. The enzyme catalyses IMP + L-aspartate + GTP = N(6)-(1,2-dicarboxyethyl)-AMP + GDP + phosphate + 2 H(+). It functions in the pathway purine metabolism; AMP biosynthesis via de novo pathway; AMP from IMP: step 1/2. In terms of biological role, plays an important role in the de novo pathway of purine nucleotide biosynthesis. Catalyzes the first committed step in the biosynthesis of AMP from IMP. This chain is Adenylosuccinate synthetase, found in Bacillus cereus (strain ZK / E33L).